The primary structure comprises 244 residues: tRNA (guanine-N(7)-)-methyltransferase (244 aa).

A compositionally biased stretch (pro residues) spans M1–L11. Positions M1–R23 are disordered. S-adenosyl-L-methionine-binding residues include E74, E99, D126, and D149. Residue D149 is part of the active site. Substrate contacts are provided by residues K153, D185, and T222 to E225.

This sequence belongs to the class I-like SAM-binding methyltransferase superfamily. TrmB family.

It catalyses the reaction guanosine(46) in tRNA + S-adenosyl-L-methionine = N(7)-methylguanosine(46) in tRNA + S-adenosyl-L-homocysteine. Its pathway is tRNA modification; N(7)-methylguanine-tRNA biosynthesis. Functionally, catalyzes the formation of N(7)-methylguanine at position 46 (m7G46) in tRNA. This Pseudomonas syringae pv. tomato (strain ATCC BAA-871 / DC3000) protein is tRNA (guanine-N(7)-)-methyltransferase.